Consider the following 471-residue polypeptide: 5-hydroxytryptamine receptor 2A (471 aa).

Residues 1–80 (MEILCEDNTS…LQEKNWSALL (80 aa)) are Extracellular-facing. 5 N-linked (GlcNAc...) asparagine glycosylation sites follow: Asn8, Asn38, Asn44, Asn51, and Asn54. A helical membrane pass occupies residues 81–97 (TAVVIILTIAGNILVIM). The Cytoplasmic segment spans residues 98-111 (AVSLEKKLQNATNY). A helical transmembrane segment spans residues 112–137 (FLMSLAIADMLLGFLVMPVSMLTILY). Topologically, residues 138–146 (GYRWPLPSK) are extracellular. Residues 147 to 171 (LCAVWIYLDVLFSTASIMHLCAISL) form a helical membrane-spanning segment. A disulfide bond links Cys148 and Cys227. Asp155 serves as a coordination point for serotonin. The DRY motif; important for ligand-induced conformation changes signature appears at 172–174 (DRY). Over 172–191 (DRYVAIQNPIHHSRFNSRTK) the chain is Cytoplasmic. The chain crosses the membrane as a helical span at residues 192-215 (AFLKIIAVWTISVGVSMPIPVFGL). Topologically, residues 216–232 (QDDSKVFKQGSCLLADD) are extracellular. The helical transmembrane segment at 233 to 258 (NFVLIGSFVAFFIPLTIMVITYFLTI) threads the bilayer. Topologically, residues 259–322 (KSLQKEATLC…QSISNEQKAC (64 aa)) are cytoplasmic. Phosphoserine is present on Ser280. The helical transmembrane segment at 323–348 (KVLGIVFFLFVVMWCPFFITNIMAVI) threads the bilayer. Residue Asn343 coordinates serotonin. The cysteines at positions 349 and 353 are disulfide-linked. At 349 to 356 (CKESCNEH) the chain is on the extracellular side. The chain crosses the membrane as a helical span at residues 357–382 (VIGALLNVFVWIGYLSSAVNPLVYTL). Residues 376-380 (NPLVY) carry the NPxxY motif; important for ligand-induced conformation changes and signaling motif. Residues 383-471 (FNKTYRSAFS…NTVNEKVSCV (89 aa)) lie on the Cytoplasmic side of the membrane. The short motif at 469–471 (SCV) is the PDZ-binding element.

The protein belongs to the G-protein coupled receptor 1 family. As to quaternary structure, interacts (via C-terminus) with MPDZ and PATJ. May interact (via C-terminus) with MPP3, PRDX6, DLG4, DLG1, CASK, APBA1 and MAGI2. Interacts with GRM2 and DRD2; this may affect signaling.

The protein resides in the cell membrane. Its subcellular location is the cell projection. It is found in the dendrite. The protein localises to the axon. It localises to the cytoplasmic vesicle. The protein resides in the membrane. Its subcellular location is the caveola. It is found in the presynapse. With respect to regulation, G-protein coupled receptor activity is regulated by lipids: oleamide increases HTR2A-mediated activity. Functionally, G-protein coupled receptor for 5-hydroxytryptamine (serotonin). Also functions as a receptor for various drugs and psychoactive substances, including mescaline, psilocybin, 1-(2,5-dimethoxy-4-iodophenyl)-2-aminopropane (DOI) and lysergic acid diethylamide (LSD). Ligand binding causes a conformation change that triggers signaling via guanine nucleotide-binding proteins (G proteins) and modulates the activity of downstream effectors. HTR2A is coupled to G(q)/G(11) G alpha proteins and activates phospholipase C-beta, releasing diacylglycerol (DAG) and inositol 1,4,5-trisphosphate (IP3) second messengers that modulate the activity of phosphatidylinositol 3-kinase and promote the release of Ca(2+) ions from intracellular stores, respectively. Beta-arrestin family members inhibit signaling via G proteins and mediate activation of alternative signaling pathways. Affects neural activity, perception, cognition and mood. Plays a role in the regulation of behavior, including responses to anxiogenic situations and psychoactive substances. Plays a role in intestinal smooth muscle contraction, and may play a role in arterial vasoconstriction. This chain is 5-hydroxytryptamine receptor 2A (HTR2A), found in Cricetulus griseus (Chinese hamster).